A 157-amino-acid chain; its full sequence is Isotocin-neurophysin IT 1 (157 aa).

The signal sequence occupies residues 1–20 (MFGTSVSALCLLFLLSVCTA). An intrachain disulfide couples Cys-21 to Cys-26. The residue at position 29 (Gly-29) is a Glycine amide. Disulfide bonds link Cys-42–Cys-86, Cys-45–Cys-59, Cys-53–Cys-76, Cys-60–Cys-66, Cys-93–Cys-106, Cys-100–Cys-118, and Cys-107–Cys-112.

This sequence belongs to the vasopressin/oxytocin family. Post-translationally, seven disulfide bonds are present in neurophysin.

The protein localises to the secreted. Its function is as follows. Isotocin causes contraction of smooth muscles. This Oncorhynchus masou (Cherry salmon) protein is Isotocin-neurophysin IT 1.